The primary structure comprises 493 residues: Xaa-Pro dipeptidase (493 aa).

An N-acetylalanine modification is found at Ala-2. The residue at position 167 (Ser-167) is a Phosphoserine. Residue His-255 participates in a dipeptide binding. Mn(2+) is bound by residues Asp-276, Asp-287, and His-370. Asp-287 provides a ligand contact to a dipeptide. The a dipeptide site is built by His-377 and Arg-398. Mn(2+) contacts are provided by Glu-412 and Glu-452.

Belongs to the peptidase M24B family. Eukaryotic-type prolidase subfamily. Homodimer. The cofactor is Mn(2+).

The catalysed reaction is Xaa-L-Pro dipeptide + H2O = an L-alpha-amino acid + L-proline. Its function is as follows. Dipeptidase that catalyzes the hydrolysis of dipeptides with a prolyl (Xaa-Pro) or hydroxyprolyl residue in the C-terminal position. The preferred dipeptide substrate is Gly-Pro, but other Xaa-Pro dipeptides, such as Ala-Pro, Met-Pro, Phe-Pro, Val-Pro and Leu-Pro, can be cleaved. Plays an important role in collagen metabolism because the high level of iminoacids in collagen. The protein is Xaa-Pro dipeptidase (Pepd) of Mus musculus (Mouse).